The primary structure comprises 267 residues: Transcription factor HES-1-A (267 aa).

A disordered region spans residues 1-43 (MPADVMEKNSSSPVAATPASVSNTPDKPKTASEHRKSSKPIME). Residues 10–22 (SSSPVAATPASVS) show a composition bias toward low complexity. Basic and acidic residues predominate over residues 26–35 (DKPKTASEHR). A bHLH domain is found at 34 to 91 (HRKSSKPIMEKRRRARINESLGQLKTLILDALKKDSSRHSKLEKADILEMTVKHLRNL). One can recognise an Orange domain in the interval 110–143 (YRAGFSECMNEVTRFLSTCEGVNTDVRTRLLGHL). The WRPW motif signature appears at 264–267 (WRPW).

In terms of assembly, transcription repression requires formation of a complex with a corepressor protein of the Groucho/TLE family. Interacts with the bHLH protein hes2, and binds DNA in the form of a heterodimer with the bHLH protein hey1/hrt1. Interacts with the bHLH protein hes6; this interaction may inhibit the transcriptional repressor activity. As to expression, starting from late neurula stage, weakly expressed in midline neural cells, where expression is restricted to the superficial layer of the prospective floorplate. Expressed in the posterior somitic mesoderm (PSM) at tailbud stage. During early tailbud stages, broadly expressed within the pronephric mesoderm both around and inside the developing pronephros. During late tailbud to early tadpole stages, expressed more ventrally in the pronephros, and although initially expressed in both the lateral and medial layers, by these later stages expression is predominantly in the lateral layer. Pronephric expression is no longer detectable in late tadpoles (stage 35).

The protein localises to the nucleus. Functionally, transcriptional repressor of a subset of early mesodermal genes including myod1 and t/bra. Binds DNA on N-box motifs: 5'-CACNAG-3'. Acts as a negative regulator of myogenesis, mediating Notch signaling to repress expression of myod1. This is Transcription factor HES-1-A (hes1-a) from Xenopus laevis (African clawed frog).